Here is a 223-residue protein sequence, read N- to C-terminus: UPF0441 protein YgiB (223 aa).

Over residues 178–195 (TVPKTAMAPKPATTTTVT) the composition is skewed to low complexity. The segment at 178–223 (TVPKTAMAPKPATTTTVTRGGFGESVAKQSTMQRSATGTSSRSMGG) is disordered. The segment covering 204-223 (AKQSTMQRSATGTSSRSMGG) has biased composition (polar residues).

The protein belongs to the UPF0441 family.

The protein is UPF0441 protein YgiB of Shigella flexneri serotype 5b (strain 8401).